The primary structure comprises 205 residues: Thiamine-phosphate synthase (205 aa).

4-amino-2-methyl-5-(diphosphooxymethyl)pyrimidine is bound by residues 34-38 and Asn66; that span reads QLRCK. Mg(2+) contacts are provided by Asp67 and Asp86. Ser105 provides a ligand contact to 4-amino-2-methyl-5-(diphosphooxymethyl)pyrimidine. 131 to 133 provides a ligand contact to 2-[(2R,5Z)-2-carboxy-4-methylthiazol-5(2H)-ylidene]ethyl phosphate; sequence TTT. Position 134 (Lys134) interacts with 4-amino-2-methyl-5-(diphosphooxymethyl)pyrimidine. Gly163 contacts 2-[(2R,5Z)-2-carboxy-4-methylthiazol-5(2H)-ylidene]ethyl phosphate.

This sequence belongs to the thiamine-phosphate synthase family. Requires Mg(2+) as cofactor.

It carries out the reaction 2-[(2R,5Z)-2-carboxy-4-methylthiazol-5(2H)-ylidene]ethyl phosphate + 4-amino-2-methyl-5-(diphosphooxymethyl)pyrimidine + 2 H(+) = thiamine phosphate + CO2 + diphosphate. The catalysed reaction is 2-(2-carboxy-4-methylthiazol-5-yl)ethyl phosphate + 4-amino-2-methyl-5-(diphosphooxymethyl)pyrimidine + 2 H(+) = thiamine phosphate + CO2 + diphosphate. It catalyses the reaction 4-methyl-5-(2-phosphooxyethyl)-thiazole + 4-amino-2-methyl-5-(diphosphooxymethyl)pyrimidine + H(+) = thiamine phosphate + diphosphate. It functions in the pathway cofactor biosynthesis; thiamine diphosphate biosynthesis; thiamine phosphate from 4-amino-2-methyl-5-diphosphomethylpyrimidine and 4-methyl-5-(2-phosphoethyl)-thiazole: step 1/1. Condenses 4-methyl-5-(beta-hydroxyethyl)thiazole monophosphate (THZ-P) and 2-methyl-4-amino-5-hydroxymethyl pyrimidine pyrophosphate (HMP-PP) to form thiamine monophosphate (TMP). This is Thiamine-phosphate synthase from Neisseria meningitidis serogroup B (strain ATCC BAA-335 / MC58).